Consider the following 113-residue polypeptide: Flagellar hook-basal body complex protein FliE (113 aa).

It belongs to the FliE family.

It localises to the bacterial flagellum basal body. This Rhizobium leguminosarum bv. trifolii (strain WSM2304) protein is Flagellar hook-basal body complex protein FliE.